Here is a 269-residue protein sequence, read N- to C-terminus: uncharacterized protein (269 aa).

This is an uncharacterized protein from Escherichia coli (strain K12).